Reading from the N-terminus, the 310-residue chain is Acetaldehyde dehydrogenase 1 (310 aa).

12 to 15 (SGNI) is an NAD(+) binding site. The active-site Acyl-thioester intermediate is Cys-132. NAD(+) contacts are provided by residues 163 to 171 (SAGPGTRAN) and Asn-287.

The protein belongs to the acetaldehyde dehydrogenase family.

It catalyses the reaction acetaldehyde + NAD(+) + CoA = acetyl-CoA + NADH + H(+). The chain is Acetaldehyde dehydrogenase 1 from Pseudomonas putida (strain W619).